We begin with the raw amino-acid sequence, 566 residues long: Mucolipin-2 (566 aa).

Over Met1 to Lys65 the chain is Cytoplasmic. The chain crosses the membrane as a helical span at residues Leu66 to Ser86. Residues Asn87–His288 are Extracellular-facing. The tract at residues Lys107–Thr123 is extracellular/lumenal pore loop. 2 cysteine pairs are disulfide-bonded: Cys164/Cys190 and Cys243/Cys274. The helical transmembrane segment at Tyr289–Thr309 threads the bilayer. The Cytoplasmic segment spans residues Arg310–Trp346. The helical transmembrane segment at Tyr347–Ile367 threads the bilayer. Over Lys368–Asp376 the chain is Extracellular. The helical transmembrane segment at Val377–Leu397 threads the bilayer. The Cytoplasmic segment spans residues Gly398–Arg419. The chain crosses the membrane as a helical span at residues Phe420 to Gly440. Residues Pro441–Asn448 lie on the Extracellular side of the membrane. Positions Leu449–Phe469 form an intramembrane region, pore-forming. Positions Asn461–Asp464 match the Selectivity filter motif. Residues Ala470–Trp480 are Extracellular-facing. Residues Leu481–Phe502 traverse the membrane as a helical segment. The Cytoplasmic portion of the chain corresponds to Ile503–Asp566.

The protein belongs to the transient receptor (TC 1.A.4) family. Polycystin subfamily. MCOLN2 sub-subfamily. Forms homooligomeric complexes; probably tetrameric. Can heterooligomerize with MCOLN1; heteromeric assemblies have different channel properties as compared to the respective homooligomers and may be tissue-specific. Interacts with TMEM176A. Expressed in activated macrophages and microglia (at protein level). As to expression, isoform 1 is widely expressed at very low levels. In terms of tissue distribution, isoform 2 is expressed at high levels in lymphoid tissues (thymus and spleen) and kidney, and at moderate levels in heart, lung, liver and stomach.

It is found in the cell membrane. The protein localises to the lysosome membrane. Its subcellular location is the recycling endosome membrane. The catalysed reaction is Ca(2+)(in) = Ca(2+)(out). It carries out the reaction Fe(2+)(in) = Fe(2+)(out). Its activity is regulated as follows. Fe(2+) channel activity is potentiated by low pH. In terms of biological role, nonselective cation channel probably playing a role in the regulation of membrane trafficking events. Acts as a Ca(2+)-permeable cation channel with inwardly rectifying activity. May activate ARF6 and be involved in the trafficking of GPI-anchored cargo proteins to the cell surface via the ARF6-regulated recycling pathway. May play a role in immune processes. In adaptive immunity, TRPML2 and TRPML1 may play redundant roles in the function of the specialized lysosomes of B cells. In the innate immune response, may play a role in the regulation of chemokine secretion and macrophage migration. Through a possible and probably tissue-specific heteromerization with MCOLN1 may be at least in part involved in many lysosome-dependent cellular events. Also functions as a Fe(2+) permeable channel. The protein is Mucolipin-2 (Mcoln2) of Mus musculus (Mouse).